We begin with the raw amino-acid sequence, 274 residues long: Penicillin-insensitive murein endopeptidase (274 aa).

A signal peptide spans 1-19; it reads MNKTAIALLALLASSASLA. Disulfide bonds link Cys-44–Cys-265, Cys-187–Cys-235, and Cys-216–Cys-223. Residues His-110, His-113, Asp-120, Asp-147, His-150, and His-211 each contribute to the Zn(2+) site.

Belongs to the peptidase M74 family. In terms of assembly, dimer. Zn(2+) serves as cofactor.

The protein localises to the periplasm. Murein endopeptidase that cleaves the D-alanyl-meso-2,6-diamino-pimelyl amide bond that connects peptidoglycan strands. Likely plays a role in the removal of murein from the sacculus. This is Penicillin-insensitive murein endopeptidase from Shigella sonnei (strain Ss046).